We begin with the raw amino-acid sequence, 360 residues long: Phospho-N-acetylmuramoyl-pentapeptide-transferase (360 aa).

Transmembrane regions (helical) follow at residues 21–41, 73–93, 94–114, 132–152, 168–188, 199–219, 239–259, 263–283, 288–308, and 338–358; these read YLTF…LWIG, TMGG…WGDL, SNPY…IGFV, WKYF…YALG, IMPQ…VGTS, GLAI…AWAT, LVIF…FNTY, VFMG…IAVL, FLLV…ILQV, and VIIR…VTLK.

It belongs to the glycosyltransferase 4 family. MraY subfamily. It depends on Mg(2+) as a cofactor.

The protein localises to the cell inner membrane. The catalysed reaction is UDP-N-acetyl-alpha-D-muramoyl-L-alanyl-gamma-D-glutamyl-meso-2,6-diaminopimeloyl-D-alanyl-D-alanine + di-trans,octa-cis-undecaprenyl phosphate = di-trans,octa-cis-undecaprenyl diphospho-N-acetyl-alpha-D-muramoyl-L-alanyl-D-glutamyl-meso-2,6-diaminopimeloyl-D-alanyl-D-alanine + UMP. It participates in cell wall biogenesis; peptidoglycan biosynthesis. Catalyzes the initial step of the lipid cycle reactions in the biosynthesis of the cell wall peptidoglycan: transfers peptidoglycan precursor phospho-MurNAc-pentapeptide from UDP-MurNAc-pentapeptide onto the lipid carrier undecaprenyl phosphate, yielding undecaprenyl-pyrophosphoryl-MurNAc-pentapeptide, known as lipid I. The sequence is that of Phospho-N-acetylmuramoyl-pentapeptide-transferase from Mannheimia succiniciproducens (strain KCTC 0769BP / MBEL55E).